We begin with the raw amino-acid sequence, 90 residues long: Progonadoliberin-3 (90 aa).

Positions 1–23 (MEASSRVTVQVLLLALVVQVTLS) are cleaved as a signal peptide. Glutamine 24 bears the Pyrrolidone carboxylic acid mark. Glycine 33 is subject to Glycine amide.

It belongs to the GnRH family.

It is found in the secreted. Its function is as follows. Stimulates the secretion of gonadotropins. In Pagrus major (Red sea bream), this protein is Progonadoliberin-3 (gnrh3).